We begin with the raw amino-acid sequence, 318 residues long: Methionyl-tRNA formyltransferase (318 aa).

112-115 lines the (6S)-5,6,7,8-tetrahydrofolate pocket; the sequence is SILP.

This sequence belongs to the Fmt family.

It carries out the reaction L-methionyl-tRNA(fMet) + (6R)-10-formyltetrahydrofolate = N-formyl-L-methionyl-tRNA(fMet) + (6S)-5,6,7,8-tetrahydrofolate + H(+). In terms of biological role, attaches a formyl group to the free amino group of methionyl-tRNA(fMet). The formyl group appears to play a dual role in the initiator identity of N-formylmethionyl-tRNA by promoting its recognition by IF2 and preventing the misappropriation of this tRNA by the elongation apparatus. The chain is Methionyl-tRNA formyltransferase from Shewanella putrefaciens (strain CN-32 / ATCC BAA-453).